A 241-amino-acid chain; its full sequence is Spiralin (241 aa).

A signal peptide spans methionine 1–alanine 23. Cysteine 24 carries the N-palmitoyl cysteine lipid modification. A lipid anchor (S-diacylglycerol cysteine) is attached at cysteine 24.

This sequence belongs to the spiralin family. As to quaternary structure, seems to occur as dimer, tetramers, and large oligomers of identical chains. Palmitate and stearate are the major lipid components.

It localises to the cell membrane. Major membrane protein of spiroplasma. The sequence is that of Spiralin (spi) from Spiroplasma citri.